Consider the following 466-residue polypeptide: Glutamate decarboxylase beta (466 aa).

The substrate site is built by T62 and N83. Residues 126–127 (SS), T212, and H275 each bind pyridoxal 5'-phosphate. The residue at position 276 (K276) is an N6-(pyridoxal phosphate)lysine. K446, K453, and K464 each carry N6-acetyllysine.

This sequence belongs to the group II decarboxylase family. Homohexamer composed of three dimers. Pyridoxal 5'-phosphate serves as cofactor.

It carries out the reaction L-glutamate + H(+) = 4-aminobutanoate + CO2. In terms of biological role, converts glutamate to gamma-aminobutyrate (GABA), consuming one intracellular proton in the reaction. The gad system helps to maintain a near-neutral intracellular pH when cells are exposed to extremely acidic conditions. The ability to survive transit through the acidic conditions of the stomach is essential for successful colonization of the mammalian host by commensal and pathogenic bacteria. The protein is Glutamate decarboxylase beta (gadB) of Shigella flexneri.